Here is a 192-residue protein sequence, read N- to C-terminus: Adenylate kinase (192 aa).

12–17 contacts ATP; that stretch reads GSGKTT. The interval 34-63 is NMP; that stretch reads STGDLLRAEVASGSELGKTIDSFISKGNLV. Residues Thr-35, Arg-40, 61–63, 88–91, and Gln-95 each bind AMP; these read NLV and GYPR. The tract at residues 130 to 136 is LID; the sequence is GRNRGTD. Position 131 (Arg-131) interacts with ATP. AMP is bound by residues Arg-133 and Arg-145. Residue Arg-173 participates in ATP binding.

It belongs to the adenylate kinase family. In terms of assembly, monomer.

The protein localises to the cytoplasm. The catalysed reaction is AMP + ATP = 2 ADP. It functions in the pathway purine metabolism; AMP biosynthesis via salvage pathway; AMP from ADP: step 1/1. Functionally, catalyzes the reversible transfer of the terminal phosphate group between ATP and AMP. Plays an important role in cellular energy homeostasis and in adenine nucleotide metabolism. This chain is Adenylate kinase, found in Campylobacter jejuni (strain RM1221).